A 185-amino-acid polypeptide reads, in one-letter code: Ribosome-recycling factor (185 aa).

Belongs to the RRF family.

The protein localises to the cytoplasm. In terms of biological role, responsible for the release of ribosomes from messenger RNA at the termination of protein biosynthesis. May increase the efficiency of translation by recycling ribosomes from one round of translation to another. The protein is Ribosome-recycling factor of Clavibacter sepedonicus (Clavibacter michiganensis subsp. sepedonicus).